Here is an 899-residue protein sequence, read N- to C-terminus: MESKAQEKQEQKKGYNPQDIESRFYAICEKRGYFEIEGNKSLWQGCAPKCFSIMMPPPNVTGVLHIGHALTFTLQDIITRFKRMEGFKTLYQPGLDHAGIATQNVVLKQLLAQGITKESLGREAFIAKVWEWKEQSGGEILNQMRHLGITPAWSRLRFTMDKGLQKAVKKAFVQWYNQGLIVQDNYMVNWCVNDGALSDIEVEYEQNHGKLYYLRYPIKDSAQSLIVATTRPETFFGDTGVMVNPNDERYKHLIGKSVILPLLGREIPIIADSHVDMSFGSGCVKVTPAHDMNDYEVGKRHNLPFITIFDEKGIFNKNAGIFQGQERLESRPLIVQKLQENGFVEKIEDYTNQVGKCYRCGNIVEPYISKQWFVKKETAHNAIQRVNNGELHFYPAQWLNNYNAWMRELKDWCISRQLWWGHRIPVWYCECGNKVASESDNPICPQCQSTITKQDEDVLDTWFSSGLWAFSTLGWGNEDTNTQPPLYHANDLAEFYPNSLLITGFDILFFWVARMILSGESLLDSLPFKDVYLHALVRDENGQKMSKSKGNIIDPMEIISSYGADTLRFTLAILCAQGRDVKLSTQSLEISKNFTNKLYNATNFLNMYLEQLGGKEALKKGFGDINHIHINTPLGQYMLVRFYTATNEVRAALENYRFNDGASILYRFLWGEFCDWGIELAKASKDSIYELGAIFKAALILLHPYMPFITDALWHTLNASDIQTSDSIMIHSYPKAMEKNEQHSQLERTFEVIQDVITSIRRLKAMLELGSTNIECIFVKLNAPFEHSLLEQFVCKLAKVKTLCITQQKPKDCVGDVSKYCECYIQLGEIDLQAIGTRLHNQRQKLEKEITKLQAMLGNENFIKNAPKAVMEQNQSALHNAQEKLDKINAELIALGLQS.

A 'HIGH' region motif is present at residues 58-68; it reads PNVTGVLHIGH. The 'KMSKS' region motif lies at 544-548; that stretch reads KMSKS. Lys-547 is an ATP binding site. The stretch at 836-898 forms a coiled coil; it reads GTRLHNQRQK…NAELIALGLQ (63 aa).

The protein belongs to the class-I aminoacyl-tRNA synthetase family. ValS type 1 subfamily. As to quaternary structure, monomer.

Its subcellular location is the cytoplasm. It carries out the reaction tRNA(Val) + L-valine + ATP = L-valyl-tRNA(Val) + AMP + diphosphate. Functionally, catalyzes the attachment of valine to tRNA(Val). As ValRS can inadvertently accommodate and process structurally similar amino acids such as threonine, to avoid such errors, it has a 'posttransfer' editing activity that hydrolyzes mischarged Thr-tRNA(Val) in a tRNA-dependent manner. This chain is Valine--tRNA ligase, found in Helicobacter hepaticus (strain ATCC 51449 / 3B1).